The primary structure comprises 196 residues: Pyridoxal 5'-phosphate synthase subunit PdxT (196 aa).

46 to 48 (GES) contributes to the L-glutamine binding site. Cys-78 functions as the Nucleophile in the catalytic mechanism. Residues Arg-105 and 133–134 (IR) each bind L-glutamine. Catalysis depends on charge relay system residues His-169 and Glu-171.

The protein belongs to the glutaminase PdxT/SNO family. In terms of assembly, in the presence of PdxS, forms a dodecamer of heterodimers. Only shows activity in the heterodimer.

The enzyme catalyses aldehydo-D-ribose 5-phosphate + D-glyceraldehyde 3-phosphate + L-glutamine = pyridoxal 5'-phosphate + L-glutamate + phosphate + 3 H2O + H(+). It carries out the reaction L-glutamine + H2O = L-glutamate + NH4(+). It functions in the pathway cofactor biosynthesis; pyridoxal 5'-phosphate biosynthesis. Catalyzes the hydrolysis of glutamine to glutamate and ammonia as part of the biosynthesis of pyridoxal 5'-phosphate. The resulting ammonia molecule is channeled to the active site of PdxS. This chain is Pyridoxal 5'-phosphate synthase subunit PdxT, found in Geobacillus stearothermophilus (Bacillus stearothermophilus).